Consider the following 120-residue polypeptide: ATP-dependent Clp protease adapter protein ClpS (120 aa).

Belongs to the ClpS family. As to quaternary structure, binds to the N-terminal domain of the chaperone ClpA.

Functionally, involved in the modulation of the specificity of the ClpAP-mediated ATP-dependent protein degradation. The polypeptide is ATP-dependent Clp protease adapter protein ClpS (Pseudomonas fluorescens (strain ATCC BAA-477 / NRRL B-23932 / Pf-5)).